We begin with the raw amino-acid sequence, 400 residues long: Enoyl-[acyl-carrier-protein] reductase [NADH] (400 aa).

Residues 48 to 53 (GSSSGY), 74 to 75 (FE), 111 to 112 (DA), and 139 to 140 (LA) contribute to the NAD(+) site. Y225 is a binding site for substrate. Y235 (proton donor) is an active-site residue. NAD(+) is bound by residues K244 and 273–275 (VVT).

It belongs to the TER reductase family. In terms of assembly, monomer.

The catalysed reaction is a 2,3-saturated acyl-[ACP] + NAD(+) = a (2E)-enoyl-[ACP] + NADH + H(+). It functions in the pathway lipid metabolism; fatty acid biosynthesis. Involved in the final reduction of the elongation cycle of fatty acid synthesis (FAS II). Catalyzes the reduction of a carbon-carbon double bond in an enoyl moiety that is covalently linked to an acyl carrier protein (ACP). This chain is Enoyl-[acyl-carrier-protein] reductase [NADH], found in Aliivibrio salmonicida (strain LFI1238) (Vibrio salmonicida (strain LFI1238)).